The chain runs to 495 residues: Glycerol kinase (495 aa).

Threonine 13 lines the ADP pocket. The ATP site is built by threonine 13, threonine 14, and serine 15. Residue threonine 13 participates in sn-glycerol 3-phosphate binding. Residue arginine 17 coordinates ADP. Residues arginine 83, glutamate 84, tyrosine 135, and aspartate 244 each contribute to the sn-glycerol 3-phosphate site. 5 residues coordinate glycerol: arginine 83, glutamate 84, tyrosine 135, aspartate 244, and glutamine 245. ADP-binding residues include threonine 266 and glycine 309. Residues threonine 266, glycine 309, glutamine 313, and glycine 410 each contribute to the ATP site. ADP is bound by residues glycine 410 and asparagine 414.

This sequence belongs to the FGGY kinase family.

It catalyses the reaction glycerol + ATP = sn-glycerol 3-phosphate + ADP + H(+). The protein operates within polyol metabolism; glycerol degradation via glycerol kinase pathway; sn-glycerol 3-phosphate from glycerol: step 1/1. Inhibited by fructose 1,6-bisphosphate (FBP). Key enzyme in the regulation of glycerol uptake and metabolism. Catalyzes the phosphorylation of glycerol to yield sn-glycerol 3-phosphate. This is Glycerol kinase from Shewanella sediminis (strain HAW-EB3).